The chain runs to 251 residues: Protein PBMUCL2 (251 aa).

The N-terminal stretch at 1–22 is a signal peptide; it reads MPRYVPLLLLLLLLRCSERGGG. 2 disordered regions span residues 36–55 and 65–251; these read WRDGVRVPGEGASWDSDRAS and LSQS…THLL. The segment covering 72 to 87 has biased composition (basic and acidic residues); that stretch reads KHPETSPKDSRIREND. N-linked (GlcNAc...) asparagine glycosylation is present at N120. Residues 150–164 show a composition bias toward polar residues; the sequence is TKDSVTADPGTTENF. The tract at residues 153 to 251 is 15 X 11 AA approximate repeats; sequence SVTADPGTTE…TTKHGDTHLL (99 aa). Basic and acidic residues predominate over residues 241–251; it reads ETTKHGDTHLL.

Detected in the brain, lung, spleen, thymus and prostate.

It is found in the secreted. The chain is Protein PBMUCL2 (HCG22) from Homo sapiens (Human).